Consider the following 310-residue polypeptide: Mitochondrial thiamine pyrophosphate carrier 1 (310 aa).

6 helical membrane passes run 16–32, 88–104, 117–141, 173–197, 218–234, and 274–291; these read VSPY…GGVA, ILYV…YSAL, IVMP…LTTY, GISG…LMFW, ICGF…TFPL, and GYGV…ISLW. Solcar repeat units lie at residues 16 to 107, 120 to 205, and 211 to 299; these read VSPY…LSKS, PSSV…AREF, and HVPF…VISA.

Belongs to the mitochondrial carrier (TC 2.A.29) family.

Its subcellular location is the mitochondrion inner membrane. Mitochondrial transporter that mediates uptake of thiamine pyrophosphate (ThPP) into mitochondria. This chain is Mitochondrial thiamine pyrophosphate carrier 1 (TPC1), found in Lodderomyces elongisporus (strain ATCC 11503 / CBS 2605 / JCM 1781 / NBRC 1676 / NRRL YB-4239) (Yeast).